The primary structure comprises 825 residues: Fibrous sheath CABYR-binding protein (825 aa).

Disordered regions lie at residues 1–43 (MVGK…SYSA) and 113–139 (QDVE…RTGY). Residues 21-40 (KSSSPKATHRIGNTSGSKGS) show a composition bias toward polar residues. Serine 160 bears the Phosphoserine mark. Disordered stretches follow at residues 168-232 (SRPD…LLED), 244-718 (QEGS…DKHS), and 732-751 (GEAS…EDEA). Positions 200 to 220 (PATNSNEEIGQKNISRTSFTQ) are enriched in polar residues. Over residues 277–290 (ATAKAEPRPAEETH) the composition is skewed to basic and acidic residues. Low complexity-rich tracts occupy residues 348–357 (AEILPPSAEE) and 398–407 (PLPAEGALEE). Over residues 610-676 (VQPPPAEEAP…PAEVQPPPAE (67 aa)) the composition is skewed to pro residues.

Interacts with CABYR. Interacts with ROPN1 and ROPN1L; the interaction increases upon spermatozoa capacitation conditions. Post-translationally, phosphorylated by PKA upon spermatozoa capacitation conditions.

Its subcellular location is the cell projection. The protein localises to the cilium. It is found in the flagellum. Functionally, may be involved in the later stages of fibrous sheath biogenesis and spermatozoa capacitation. Inhibits ROPN1 and ROPN1L SUMOylation. Binds calcium. The protein is Fibrous sheath CABYR-binding protein (FSCB) of Homo sapiens (Human).